The sequence spans 512 residues: Ribonuclease Y (512 aa).

The helical transmembrane segment at Val-2–Leu-22 threads the bilayer. Residues Ser-202–Leu-262 enclose the KH domain. The 94-residue stretch at Leu-328–Ala-421 folds into the HD domain.

This sequence belongs to the RNase Y family.

Its subcellular location is the cell membrane. Its function is as follows. Endoribonuclease that initiates mRNA decay. The chain is Ribonuclease Y from Parabacteroides distasonis (strain ATCC 8503 / DSM 20701 / CIP 104284 / JCM 5825 / NCTC 11152).